We begin with the raw amino-acid sequence, 190 residues long: Elongation factor P (190 aa).

Belongs to the elongation factor P family.

It localises to the cytoplasm. The protein operates within protein biosynthesis; polypeptide chain elongation. Functionally, involved in peptide bond synthesis. Stimulates efficient translation and peptide-bond synthesis on native or reconstituted 70S ribosomes in vitro. Probably functions indirectly by altering the affinity of the ribosome for aminoacyl-tRNA, thus increasing their reactivity as acceptors for peptidyl transferase. The sequence is that of Elongation factor P from Persephonella marina (strain DSM 14350 / EX-H1).